The sequence spans 243 residues: Terpene cyclase paxB (243 aa).

7 helical membrane-spanning segments follow: residues 23-43 (FVVGMGVGWIINYIGMVYISF), 49-69 (GMSIMPLCCNIAWELVYCLVF), 78-98 (GVFWMGLLINFGVMYAAITFS), 112-132 (ISLIFFVATMGFLSGHVALAL), 134-154 (IGPALAYSWGAVICQLLLSVG), 172-194 (LWASRFLGSTCTVGFAGLRWMYW), and 205-225 (LVLWSLVVFLSIDGFYGICFW).

The protein belongs to the paxB family.

The protein localises to the membrane. The protein operates within secondary metabolite biosynthesis. Terpene cyclase; part of the ATM2 gene cluster that mediates the biosynthesis of paxilline, a mycotoxin that acts as an inhibitor of mammalian maxi-K channels. PaxG, the geranylgeranyl diphosphate (GGPP) synthase is proposed to catalyze the first step in paxilline biosynthesis. Condensation of indole-3-glycerol phosphate with GGPP by paxC then forms 3-geranylgeranylindole (3-GGI), followed by epoxidation and cyclization of this intermediate (by paxM and paxB) to form paspaline. Paspaline is subsequently converted to 13-desoxypaxilline by paxP, the latter being then converted to paxilline by paxQ. Finally paxilline can be mono- and di-prenylated by paxD. The sequence is that of Terpene cyclase paxB from Penicillium paxilli.